The chain runs to 463 residues: Rop guanine nucleotide exchange factor 4 (463 aa).

2 disordered regions span residues 1-25 and 55-87; these read MESSSNSDQNEGTPTSSVSSPYRRT and GHEEDVSEDAEEPKDDVVNDVHGDGDEEDSDID. The span at 59–68 shows a compositional bias: acidic residues; sequence DVSEDAEEPK. The segment covering 69–78 has biased composition (basic and acidic residues); that stretch reads DDVVNDVHGD. The region spanning 84–463 is the PRONE domain; sequence SDIDSAEDAE…VDRTVRNRDD (380 aa).

Interacts with ARAC10/ROP11. In terms of tissue distribution, expressed in root vascular tissue and trichoblast cell files. Expressed in root metaxylem cell files. Expressed in guard cells of cotyledons, rosette leaves, sepals, petal, stigmas and siliques. Expressed in root metaxylem cell files.

The protein localises to the cytoplasm. The protein resides in the cell membrane. In terms of biological role, guanine-nucleotide exchange factor (GEF) that acts as an activator of Rop (Rho of plants) GTPases by promoting the exchange of GDP for GTP. In association with ROPGEF1, acts as a specific regulator of ARAC10/ROP11 function in ABA-mediated stomatal closure. This is Rop guanine nucleotide exchange factor 4 (ROPGEF4) from Arabidopsis thaliana (Mouse-ear cress).